A 249-amino-acid polypeptide reads, in one-letter code: 3alpha-hydroxy bile acid-CoA-ester 3-dehydrogenase 1/3 (249 aa).

NAD(+)-binding positions include 15 to 18 (TRGI), Glu-38, Glu-42, and Asn-92. A substrate-binding site is contributed by Ser-144. Catalysis depends on proton donor/acceptor residues Tyr-157 and Lys-161. NAD(+) is bound by residues Lys-161 and 190–192 (VDT).

It belongs to the short-chain dehydrogenases/reductases (SDR) family. In terms of assembly, homotetramer.

The enzyme catalyses a 3alpha-hydroxy bile acid CoA + NAD(+) = a 3-oxo bile acid CoA + NADH + H(+). It carries out the reaction choloyl-CoA + NAD(+) = 7alpha,12alpha-dihydroxy-3-oxochol-24-oyl-CoA + NADH + H(+). The catalysed reaction is chenodeoxycholoyl-CoA + NAD(+) = 7alpha-hydroxy-3-oxochol-24-oyl-CoA + NADH + H(+). It catalyses the reaction deoxycholoyl-CoA + NAD(+) = 12alpha-hydroxy-3-oxocholan-24-oyl-CoA + NADH + H(+). The enzyme catalyses lithocholoyl-CoA + NAD(+) = 3-oxocholan-24-oyl-CoA + NADH + H(+). It functions in the pathway lipid metabolism; bile acid biosynthesis. Involved in the multi-step bile acid 7alpha-dehydroxylation pathway that transforms primary bile acids to secondary bile acids in the human gut. Catalyzes the oxidation of C3-hydroxyl group of CoA conjugated bile acids generating a C3-oxo bile acid intermediate. Can use choloyl-CoA, chenodeoxycholoyl-CoA, deoxycholoyl-CoA, and lithocholoyl-CoA as substrates with similar efficiency. Highly prefers NAD over NADP as cosubstrate. Also catalyzes the reverse reactions; in vitro, the preferred direction of reaction depends on the pH. Has very little activity with unconjugated (non-CoA) bile acid substrates. The polypeptide is 3alpha-hydroxy bile acid-CoA-ester 3-dehydrogenase 1/3 (baiA1) (Clostridium scindens (strain JCM 10418 / VPI 12708)).